The primary structure comprises 138 residues: MRHGYRGRRFNRTTEHRKAMFANMSAALIKHEQIVTTLPKAKDLRPVIEKLISLGRTDSIHARRLAMAQIRDADMVKKLFSVLGPRYQSRPGGYCRIMKAGFRYGDNAPMAVIEFVDRDVDARGKDSGPTSVETAEAA.

It belongs to the bacterial ribosomal protein bL17 family. Part of the 50S ribosomal subunit. Contacts protein L32.

This chain is Large ribosomal subunit protein bL17, found in Methylorubrum extorquens (strain PA1) (Methylobacterium extorquens).